Here is a 229-residue protein sequence, read N- to C-terminus: N-acetyltransferase MPR1 (229 aa).

The N-acetyltransferase domain maps to 65-219 (FNLEIESGKT…DAIIYGKDLT (155 aa)). Position 135 (asparagine 135) interacts with substrate. 145–150 (RGQKVG) is a CoA binding site. 172–173 (NL) provides a ligand contact to substrate.

Belongs to the acetyltransferase family. Homodimer. Not glycosylated.

The protein localises to the cytoplasm. Its subcellular location is the mitochondrion. It catalyses the reaction L-glutamate 5-semialdehyde + acetyl-CoA = N-acetyl-L-glutamate 5-semialdehyde + CoA + H(+). In terms of biological role, N-acetyltransferase involved in oxidative stress resistance. Acetylates the toxic proline metabolism intermediate (S)-1-pyrroline-5-carboxylate (P5C), or more likely its spontaneously forming tautomer glutamate-5-semialdehyde (GSA) into N-acetyl-GSA for arginine synthesis in the mitochondria. P5C has been shown to increase the levels of reactive oxygen species (ROS) in the cell by inhibiting the function of the respiratory chain in the mitochondria. The enzyme is able to reduce intracellular ROS levels under P5C-induced oxidative stress and protects cells from damage by oxidative stress. Also acetylates and thereby detoxifies the proline analog azetidine-2-carboxylate (AZC), however it is unlikely that AZC is a natural substrate as it occurs only in plants belonging to the Lilaceae family. Does not acetylate proline. The protein is N-acetyltransferase MPR1 of Saccharomyces cerevisiae (Baker's yeast).